A 657-amino-acid chain; its full sequence is UvrABC system protein B (657 aa).

Residues 25 to 182 (KSIKQGNEFQ…KKLIEIQYER (158 aa)) form the Helicase ATP-binding domain. Residue 38 to 45 (GVTGSGKT) participates in ATP binding. The short motif at 91–114 (YYDYYQPEAYVPQTDTFIEKDASI) is the Beta-hairpin element. A Helicase C-terminal domain is found at 429–595 (QIDDLYTEIQ…TINKEVRELI (167 aa)). In terms of domain architecture, UVR spans 621-656 (KKLIKEYTDEMKLAAKNLQFERAAQLRDKIEELKGK).

This sequence belongs to the UvrB family. As to quaternary structure, forms a heterotetramer with UvrA during the search for lesions. Interacts with UvrC in an incision complex.

The protein localises to the cytoplasm. Functionally, the UvrABC repair system catalyzes the recognition and processing of DNA lesions. A damage recognition complex composed of 2 UvrA and 2 UvrB subunits scans DNA for abnormalities. Upon binding of the UvrA(2)B(2) complex to a putative damaged site, the DNA wraps around one UvrB monomer. DNA wrap is dependent on ATP binding by UvrB and probably causes local melting of the DNA helix, facilitating insertion of UvrB beta-hairpin between the DNA strands. Then UvrB probes one DNA strand for the presence of a lesion. If a lesion is found the UvrA subunits dissociate and the UvrB-DNA preincision complex is formed. This complex is subsequently bound by UvrC and the second UvrB is released. If no lesion is found, the DNA wraps around the other UvrB subunit that will check the other stand for damage. The chain is UvrABC system protein B from Clostridium botulinum (strain Eklund 17B / Type B).